We begin with the raw amino-acid sequence, 84 residues long: UPF0457 protein BT9727_2307 (84 aa).

This sequence belongs to the UPF0457 family.

The polypeptide is UPF0457 protein BT9727_2307 (Bacillus thuringiensis subsp. konkukian (strain 97-27)).